The following is a 482-amino-acid chain: Anaerobic nitric oxide reductase flavorubredoxin (482 aa).

A zinc metallo-hydrolase region spans residues 30 to 210; that stretch reads LRGSSYNSYL…PFSRLVTPKI (181 aa). Residues H79, E81, D83, H147, D166, and H227 each coordinate Fe cation. A Flavodoxin-like domain is found at 254 to 393; it reads ITLFYDTMSN…ICRQHGREIA (140 aa). FMN contacts are provided by residues 260–264 and 342–369; these read TMSNN and AFGSHGWSGGAVDRLSTRLQDAGFEMSM. Residues 426-477 form the Rubredoxin-like domain; the sequence is GPCMQCSVCQWVYDPALGEPLQDVAPGTPWSDVPDNFLCPECSLGKDVFDVL. Residues C431, C434, C464, and C467 each coordinate Fe cation.

The protein in the N-terminal section; belongs to the zinc metallo-hydrolase group 3 family. As to quaternary structure, homotetramer. Requires Fe cation as cofactor. It depends on FMN as a cofactor.

The protein resides in the cytoplasm. It functions in the pathway nitrogen metabolism; nitric oxide reduction. Its function is as follows. Anaerobic nitric oxide reductase; uses NADH to detoxify nitric oxide (NO), protecting several 4Fe-4S NO-sensitive enzymes. Has at least 2 reductase partners, only one of which (NorW, flavorubredoxin reductase) has been identified. NO probably binds to the di-iron center; electrons enter from the NorW at rubredoxin and are transferred sequentially to the FMN center and the di-iron center. Also able to function as an aerobic oxygen reductase. The sequence is that of Anaerobic nitric oxide reductase flavorubredoxin from Enterobacter sp. (strain 638).